The following is a 307-amino-acid chain: 4-diphosphocytidyl-2-C-methyl-D-erythritol kinase (307 aa).

Lys-16 is an active-site residue. Position 101-111 (101-111 (PVAGGMAGGSA)) interacts with ATP. Asp-143 is a catalytic residue.

It belongs to the GHMP kinase family. IspE subfamily.

It carries out the reaction 4-CDP-2-C-methyl-D-erythritol + ATP = 4-CDP-2-C-methyl-D-erythritol 2-phosphate + ADP + H(+). The protein operates within isoprenoid biosynthesis; isopentenyl diphosphate biosynthesis via DXP pathway; isopentenyl diphosphate from 1-deoxy-D-xylulose 5-phosphate: step 3/6. In terms of biological role, catalyzes the phosphorylation of the position 2 hydroxy group of 4-diphosphocytidyl-2C-methyl-D-erythritol. The sequence is that of 4-diphosphocytidyl-2-C-methyl-D-erythritol kinase from Nocardia farcinica (strain IFM 10152).